A 443-amino-acid chain; its full sequence is Na(+)-translocating ferredoxin:NAD(+) oxidoreductase complex subunit C (443 aa).

2 consecutive 4Fe-4S ferredoxin-type domains span residues 359 to 391 (ESAKIATPSNCIHCGKCVGVCPIHLQPLNIAEY) and 398 to 428 (DKCESNNAMDCIECGSCSYICPAKRTLVSSI). [4Fe-4S] cluster-binding residues include Cys-369, Cys-372, Cys-375, Cys-379, Cys-408, Cys-411, Cys-414, and Cys-418.

It belongs to the 4Fe4S bacterial-type ferredoxin family. RnfC subfamily. The complex is composed of six subunits: RnfA, RnfB, RnfC, RnfD, RnfE and RnfG. [4Fe-4S] cluster is required as a cofactor.

It localises to the cell membrane. It carries out the reaction 2 reduced [2Fe-2S]-[ferredoxin] + Na(+)(in) + NAD(+) + H(+) = 2 oxidized [2Fe-2S]-[ferredoxin] + Na(+)(out) + NADH. Functionally, part of a membrane-bound complex that couples electron transfer with translocation of ions across the membrane. Couples electron transfer from reduced ferredoxin to NAD(+) with electrogenic movement of Na(+) out of the cell. Involved in caffeate respiration. This Acetobacterium woodii (strain ATCC 29683 / DSM 1030 / JCM 2381 / KCTC 1655 / WB1) protein is Na(+)-translocating ferredoxin:NAD(+) oxidoreductase complex subunit C.